Reading from the N-terminus, the 1178-residue chain is Thrombospondin-2 (1178 aa).

The signal sequence occupies residues 1–22 (MLQRSRLLWLAVFITLWVSSDA). Residues 25 to 221 (DAKEEENTFD…LQNIHLIFDT (197 aa)) form the Laminin G-like domain. Residues asparagine 157, asparagine 244, asparagine 317, and asparagine 322 are each glycosylated (N-linked (GlcNAc...) asparagine). One can recognise a VWFC domain in the interval 324-381 (SVCWQDGRVFADSESWIVDSCTKCTCQDSKIVCHQITCPPVSCADPSFIEGECCPVCS). 3 consecutive TSP type-1 domains span residues 387–437 (EEGW…KKCD), 443–498 (DGGW…APCP), and 500–555 (NGQW…RDCP). 27 disulfides stabilise this stretch: cysteine 399–cysteine 431, cysteine 403–cysteine 436, cysteine 414–cysteine 421, cysteine 455–cysteine 492, cysteine 459–cysteine 497, cysteine 470–cysteine 482, cysteine 512–cysteine 549, cysteine 516–cysteine 554, cysteine 527–cysteine 539, cysteine 559–cysteine 570, cysteine 564–cysteine 580, cysteine 583–cysteine 594, cysteine 600–cysteine 616, cysteine 607–cysteine 625, cysteine 628–cysteine 652, cysteine 658–cysteine 671, cysteine 665–cysteine 684, cysteine 686–cysteine 697, cysteine 713–cysteine 721, cysteine 726–cysteine 746, cysteine 762–cysteine 782, cysteine 785–cysteine 805, cysteine 821–cysteine 841, cysteine 844–cysteine 864, cysteine 882–cysteine 902, cysteine 918–cysteine 938, and cysteine 954–cysteine 1175. Asparagine 463 carries N-linked (GlcNAc...) asparagine glycosylation. In terms of domain architecture, EGF-like 1 spans 555–595 (PIDGCLSNPCFPGAECNSYPDGSWSCGPCPAGFLGNGTVCE). Asparagine 590 carries an N-linked (GlcNAc...) asparagine glycan. Positions 654-698 (PENPCKDKTHSCHKSAECIYLGHFSDPMYKCECRTGYAGDGRICG) constitute an EGF-like 2 domain. TSP type-3 repeat units follow at residues 699–734 (EDSDLDGWPNNNLVCAANATYHCVKDNCPLLPNSGQ), 735–770 (EDFDKDGKGDACDEDDDNDGVEDDKDNCPLLFNPRQ), 771–793 (FDYDKDEVGDRCDNCPYVHNPAQ), 794–829 (IDTDNNGEGDSCAVDIDGDDIFNERDNCPYVYNTDQ), 830–852 (SDTDGDGVGDQCDNCPLMHNPDQ), 853–890 (TDADNDLVGDQCDNNEDIDEDGHQNNQDNCPYIPNANQ), 891–926 (ADHDKDGKGDACDPDDDNDGIPDDRDNCRLRYNPEQ), and 927–962 (EDSDGDGRGDICKDDFDDDNVPDIFDVCPENNAISE). Asparagine 716 carries an N-linked (GlcNAc...) asparagine glycan. The disordered stretch occupies residues 737-760 (FDKDGKGDACDEDDDNDGVEDDKD). The segment covering 746 to 759 (CDEDDDNDGVEDDK) has biased composition (acidic residues). Residues 852-941 (QTDADNDLVG…DGRGDICKDD (90 aa)) form a disordered region. Acidic residues predominate over residues 853-872 (TDADNDLVGDQCDNNEDIDE). The span at 891–901 (ADHDKDGKGDA) shows a compositional bias: basic and acidic residues. The span at 902 to 911 (CDPDDDNDGI) shows a compositional bias: acidic residues. Composition is skewed to basic and acidic residues over residues 912-924 (PDDRDNCRLRYNP) and 931-940 (GDGRGDICKD). A Cell attachment site motif is present at residues 934 to 936 (RGD). Positions 966–1178 (RKFQMVPLDP…SDLKYECRDA (213 aa)) constitute a TSP C-terminal domain. N-linked (GlcNAc...) asparagine glycosylation occurs at asparagine 1075.

It belongs to the thrombospondin family. In terms of assembly, homotrimer; disulfide-linked. Can bind to fibrinogen, fibronectin, laminin and type V collagen.

Its function is as follows. Adhesive glycoprotein that mediates cell-to-cell and cell-to-matrix interactions. The chain is Thrombospondin-2 (THBS2) from Gallus gallus (Chicken).